Reading from the N-terminus, the 148-residue chain is SsrA-binding protein (148 aa).

The disordered stretch occupies residues 124–148 (QFDKRETEKDRDWQREKARLMREKA).

It belongs to the SmpB family.

The protein localises to the cytoplasm. Required for rescue of stalled ribosomes mediated by trans-translation. Binds to transfer-messenger RNA (tmRNA), required for stable association of tmRNA with ribosomes. tmRNA and SmpB together mimic tRNA shape, replacing the anticodon stem-loop with SmpB. tmRNA is encoded by the ssrA gene; the 2 termini fold to resemble tRNA(Ala) and it encodes a 'tag peptide', a short internal open reading frame. During trans-translation Ala-aminoacylated tmRNA acts like a tRNA, entering the A-site of stalled ribosomes, displacing the stalled mRNA. The ribosome then switches to translate the ORF on the tmRNA; the nascent peptide is terminated with the 'tag peptide' encoded by the tmRNA and targeted for degradation. The ribosome is freed to recommence translation, which seems to be the essential function of trans-translation. The chain is SsrA-binding protein from Ralstonia pickettii (strain 12J).